We begin with the raw amino-acid sequence, 528 residues long: Protein MGF 505-7R (528 aa).

2 ANK repeats span residues S54–Y83 and N261–T291.

Belongs to the asfivirus MGF 505 family. Interacts with host STING1. Interacts with host JAK1; this interaction leads to JAK1 degradation. Interacts with host JAK2; this interaction leads to JAK2 degradation. Interacts with host RELA; this interaction inhibits NF-kappa-B promoter activity.

Its subcellular location is the host cytoplasm. Plays a role in virus cell tropism, and may be required for efficient virus replication in macrophages. Interferes with host NF-kappa-B promoter activity mediated by TLR8. Mechanistically, inhibits the phosphorylation and subsequent nuclear translocation of host NF-kappa-B RELA subunit downstream of TLR8. Promotes the expression of the autophagy-related protein host ULK1 to degrade host STING and inhibit the interferon response. Also inhibits JAK1- and JAK2-mediated signaling and thus negatively regulates the IFN-gamma signaling. This chain is Protein MGF 505-7R, found in African swine fever virus (isolate Tick/Malawi/Lil 20-1/1983) (ASFV).